The following is a 206-amino-acid chain: Large ribosomal subunit protein uL4 (206 aa).

The interval 43–78 (ARSGNRKQKDREEVHHTTKKPWRQKGTGRARAGMSS) is disordered. Positions 49 to 58 (KQKDREEVHH) are enriched in basic and acidic residues. Residues 59–70 (TTKKPWRQKGTG) are compositionally biased toward basic residues.

Belongs to the universal ribosomal protein uL4 family. As to quaternary structure, part of the 50S ribosomal subunit.

Functionally, one of the primary rRNA binding proteins, this protein initially binds near the 5'-end of the 23S rRNA. It is important during the early stages of 50S assembly. It makes multiple contacts with different domains of the 23S rRNA in the assembled 50S subunit and ribosome. In terms of biological role, forms part of the polypeptide exit tunnel. This Herminiimonas arsenicoxydans protein is Large ribosomal subunit protein uL4.